Consider the following 185-residue polypeptide: ATP synthase subunit delta, chloroplastic (185 aa).

The protein belongs to the ATPase delta chain family. In terms of assembly, F-type ATPases have 2 components, F(1) - the catalytic core - and F(0) - the membrane proton channel. F(1) has five subunits: alpha(3), beta(3), gamma(1), delta(1), epsilon(1). CF(0) has four main subunits: a(1), b(1), b'(1) and c(10-14). The alpha and beta chains form an alternating ring which encloses part of the gamma chain. F(1) is attached to F(0) by a central stalk formed by the gamma and epsilon chains, while a peripheral stalk is formed by the delta, b and b' chains.

Its subcellular location is the plastid. The protein localises to the chloroplast thylakoid membrane. Functionally, f(1)F(0) ATP synthase produces ATP from ADP in the presence of a proton or sodium gradient. F-type ATPases consist of two structural domains, F(1) containing the extramembraneous catalytic core and F(0) containing the membrane proton channel, linked together by a central stalk and a peripheral stalk. During catalysis, ATP synthesis in the catalytic domain of F(1) is coupled via a rotary mechanism of the central stalk subunits to proton translocation. Its function is as follows. This protein is part of the stalk that links CF(0) to CF(1). It either transmits conformational changes from CF(0) to CF(1) or is implicated in proton conduction. This chain is ATP synthase subunit delta, chloroplastic, found in Gracilaria tenuistipitata var. liui (Red alga).